The chain runs to 308 residues: Zinc finger protein unc-98 (308 aa).

C2H2-type zinc fingers lie at residues 111 to 133 (YKCR…ERIH) and 139 to 161 (YVCG…AAQH). The segment at 166 to 186 (GFKCDCGRTFFSYTEMLYHKH) adopts a C2H2-type 3; degenerate zinc-finger fold. Residues 244-266 (YICEYCSKSYSDSRGLAYHMYSH) form a C2H2-type 4 zinc finger.

The protein resides in the nucleus. It is found in the cytoplasm. In terms of biological role, probable transcription factor. Required for muscle structure. Its dual subcellular localization suggests that it may function both as a muscle adhesion complex protein and as a transcription factor, or work together with transcription factors, to influence gene expression. Thought to act as a molecular bridge between unc-97 and mhc-a at the M-line of muscles, possibly in a signaling role. In Caenorhabditis briggsae, this protein is Zinc finger protein unc-98.